We begin with the raw amino-acid sequence, 364 residues long: Mannose-1-phosphate guanyltransferase (364 aa).

The protein belongs to the transferase hexapeptide repeat family.

The protein resides in the cytoplasm. The catalysed reaction is alpha-D-mannose 1-phosphate + GTP + H(+) = GDP-alpha-D-mannose + diphosphate. It functions in the pathway nucleotide-sugar biosynthesis; GDP-alpha-D-mannose biosynthesis; GDP-alpha-D-mannose from alpha-D-mannose 1-phosphate (GTP route): step 1/1. Functionally, involved in cell wall synthesis where it is required for glycosylation. Involved in cell cycle progression through cell-size checkpoint. The sequence is that of Mannose-1-phosphate guanyltransferase (mpg-1) from Neurospora crassa (strain ATCC 24698 / 74-OR23-1A / CBS 708.71 / DSM 1257 / FGSC 987).